Here is a 430-residue protein sequence, read N- to C-terminus: Potassium channel subfamily K member 12 (430 aa).

The Cytoplasmic portion of the chain corresponds to 1-38 (MSSRSPRPPPRRCRRRLPRPSCCCCCCRRSHLNEDTGR). An ER retention/retrieval signal region spans residues 11–16 (RRCRRR). The helical transmembrane segment at 39–59 (FVLLAALIGLYLVAGATVFSA) threads the bilayer. Asn78 carries an N-linked (GlcNAc...) asparagine glycan. The pore-forming intramembrane region spans 114–134 (WDFPGAFYFVGTVVSTIGFGM). K(+) is bound by residues Thr129, Ile130, and Gly131. The segment at 129–134 (TIGFGM) is selectivity filter 1. A helical membrane pass occupies residues 145–165 (FLIAYGLFGCAGTILFFNLFL). Residues 166–212 (ERIISLLAFIMRACRERQLRRSGLLPATFRRGSALSEADSLAGWKPS) lie on the Cytoplasmic side of the membrane. The chain crosses the membrane as a helical span at residues 213–233 (VYHVLLILGLFAVLLACCASA). The pore-forming intramembrane region spans 243–263 (YVDSLYFCFVTFSTIGFGDLV). K(+) contacts are provided by Thr256, Ile257, Gly258, and Phe259. The segment at 256-261 (TIGFGD) is selectivity filter 2. Residues 282–302 (LFILLGVCCIYSLFNVISILI) form a helical membrane-spanning segment. Over 303-430 (KQVLNWMLRK…NRLAETSASR (128 aa)) the chain is Cytoplasmic.

This sequence belongs to the two pore domain potassium channel (TC 1.A.1.8) family. Homodimer. Heterodimer with KCNK13. In terms of tissue distribution, highly expressed in most brain regions. Also expressed in other tissues such as lung, kidney, liver, stomach and spleen.

The protein resides in the cell membrane. It is found in the endoplasmic reticulum membrane. The catalysed reaction is K(+)(in) = K(+)(out). In terms of biological role, k(+) channel subunit that may homo- and heterodimerize to form functional channels with distinct regulatory and gating properties. Can heterodimerize with KCNK13 subunit to conduct K(+) outward rectifying currents at the plasma membrane. The homodimers are mainly retained in the endoplasmic reticulum compartment and may be targeted to the cell surface upon phosphorylation or other activation signals yet to be elucidated. This chain is Potassium channel subfamily K member 12 (Kcnk12), found in Rattus norvegicus (Rat).